We begin with the raw amino-acid sequence, 211 residues long: Imidazole glycerol phosphate synthase subunit HisH (211 aa).

A Glutamine amidotransferase type-1 domain is found at 3–211; it reads VIAVIDYDMG…VSQIKAPVLV (209 aa). Cys-81 serves as the catalytic Nucleophile. Residues His-186 and Glu-188 contribute to the active site.

As to quaternary structure, heterodimer of HisH and HisF.

Its subcellular location is the cytoplasm. It catalyses the reaction 5-[(5-phospho-1-deoxy-D-ribulos-1-ylimino)methylamino]-1-(5-phospho-beta-D-ribosyl)imidazole-4-carboxamide + L-glutamine = D-erythro-1-(imidazol-4-yl)glycerol 3-phosphate + 5-amino-1-(5-phospho-beta-D-ribosyl)imidazole-4-carboxamide + L-glutamate + H(+). The enzyme catalyses L-glutamine + H2O = L-glutamate + NH4(+). The protein operates within amino-acid biosynthesis; L-histidine biosynthesis; L-histidine from 5-phospho-alpha-D-ribose 1-diphosphate: step 5/9. Its function is as follows. IGPS catalyzes the conversion of PRFAR and glutamine to IGP, AICAR and glutamate. The HisH subunit catalyzes the hydrolysis of glutamine to glutamate and ammonia as part of the synthesis of IGP and AICAR. The resulting ammonia molecule is channeled to the active site of HisF. The polypeptide is Imidazole glycerol phosphate synthase subunit HisH (Cyanothece sp. (strain PCC 7425 / ATCC 29141)).